The chain runs to 507 residues: Protein zntA (507 aa).

Positions 1 to 18 (MSIFAYSILAGLAPLLSS) are cleaved as a signal peptide. Asn-31 is a glycosylation site (N-linked (GlcNAc...) asparagine). A helical membrane pass occupies residues 35 to 55 (FHILLCISAGLLFAVASLELI). Residues 124-179 (GLNLNNLNQATNLDNNEEDNDNLDNDGENEIENDHDHDHQEDEGGDNDHDHESEEK) form a disordered region. A compositionally biased stretch (low complexity) spans 125–137 (LNLNNLNQATNLD). A compositionally biased stretch (acidic residues) spans 138 to 154 (NNEEDNDNLDNDGENEI). A compositionally biased stretch (basic and acidic residues) spans 155–179 (ENDHDHDHQEDEGGDNDHDHESEEK). A helical membrane pass occupies residues 185–205 (IPMYGIGFGFAILIIVESIFS). A disordered region spans residues 209–264 (GGGGGGGHHSHSHGSLSSSSSNDVISDYISNNNSNNINNNDDDNNNNNNNNDDDDD). Residues 221-258 (HGSLSSSSSNDVISDYISNNNSNNINNNDDDNNNNNNN) are compositionally biased toward low complexity. Residues Asn-240, Asn-298, Asn-328, Asn-342, and Asn-351 are each glycosylated (N-linked (GlcNAc...) asparagine). The segment at 305 to 350 (PNIASPVMNKDNNNNDKDKNRNSNKSDIKNSGSINNGNNSGNNNNN) is disordered. Residues 317 to 332 (NNNDKDKNRNSNKSDI) show a composition bias toward basic and acidic residues. Low complexity predominate over residues 333–350 (KNSGSINNGNNSGNNNNN). 5 consecutive transmembrane segments (helical) span residues 355 to 375 (LTITTFIALSIHSFVDGVVIS), 388 to 408 (VALAIVIHKIPDGLVLSSLIL), 422 to 442 (FFYFLLISCMTPLGSFISSFL), 451 to 471 (GAFVLGFGAGTFIYITSTAIL), and 486 to 506 (LFSIFLGYLLFIFLDSQFHGA).

The protein belongs to the ZIP transporter (TC 2.A.5) family.

The protein localises to the membrane. Its function is as follows. May transport divalent cations. May participate, with dstA, in the regulation of the differentiation of stalk cells during development. This chain is Protein zntA (zntA), found in Dictyostelium discoideum (Social amoeba).